A 71-amino-acid polypeptide reads, in one-letter code: DNA-directed RNA polymerase subunit omega (71 aa).

This sequence belongs to the RNA polymerase subunit omega family. The RNAP catalytic core consists of 2 alpha, 1 beta, 1 beta' and 1 omega subunit. When a sigma factor is associated with the core the holoenzyme is formed, which can initiate transcription.

It carries out the reaction RNA(n) + a ribonucleoside 5'-triphosphate = RNA(n+1) + diphosphate. In terms of biological role, promotes RNA polymerase assembly. Latches the N- and C-terminal regions of the beta' subunit thereby facilitating its interaction with the beta and alpha subunits. The polypeptide is DNA-directed RNA polymerase subunit omega (Azoarcus sp. (strain BH72)).